We begin with the raw amino-acid sequence, 207 residues long: Phosphoenolpyruvate guanylyltransferase (207 aa).

Phosphoenolpyruvate-binding residues include Thr-137, Gly-153, and Ser-156.

This sequence belongs to the CofC family.

It catalyses the reaction phosphoenolpyruvate + GTP + H(+) = enolpyruvoyl-2-diphospho-5'-guanosine + diphosphate. The protein operates within cofactor biosynthesis; coenzyme F420 biosynthesis. Guanylyltransferase that catalyzes the activation of phosphoenolpyruvate (PEP) as enolpyruvoyl-2-diphospho-5'-guanosine, via the condensation of PEP with GTP. It is involved in the biosynthesis of coenzyme F420, a hydride carrier cofactor. The chain is Phosphoenolpyruvate guanylyltransferase from Sphaerobacter thermophilus (strain ATCC 49802 / DSM 20745 / KCCM 41009 / NCIMB 13125 / S 6022).